The chain runs to 203 residues: Outer-membrane lipoprotein carrier protein (203 aa).

The N-terminal stretch at 1 to 21 (MKKMAIACALLSSVVASSVWA) is a signal peptide. The segment at 178–203 (QQNGAVDPSKFTFTPPQGVTIDDQRK) is disordered.

This sequence belongs to the LolA family. As to quaternary structure, monomer.

It is found in the periplasm. Its function is as follows. Participates in the translocation of lipoproteins from the inner membrane to the outer membrane. Only forms a complex with a lipoprotein if the residue after the N-terminal Cys is not an aspartate (The Asp acts as a targeting signal to indicate that the lipoprotein should stay in the inner membrane). This is Outer-membrane lipoprotein carrier protein from Salmonella agona (strain SL483).